We begin with the raw amino-acid sequence, 246 residues long: Purine nucleoside phosphorylase ORF3 (246 aa).

Residues histidine 71, cysteine 110, and histidine 127 each coordinate Zn(2+).

This sequence belongs to the purine nucleoside phosphorylase YfiH/LACC1 family. In terms of assembly, homodimer. Cu(2+) is required as a cofactor. It depends on Zn(2+) as a cofactor.

The enzyme catalyses adenosine + phosphate = alpha-D-ribose 1-phosphate + adenine. The catalysed reaction is S-methyl-5'-thioadenosine + phosphate = 5-(methylsulfanyl)-alpha-D-ribose 1-phosphate + adenine. It catalyses the reaction inosine + phosphate = alpha-D-ribose 1-phosphate + hypoxanthine. It carries out the reaction adenosine + H2O + H(+) = inosine + NH4(+). In terms of biological role, purine nucleoside enzyme that catalyzes the phosphorolysis of adenosine and inosine nucleosides, yielding D-ribose 1-phosphate and the respective free bases, adenine and hypoxanthine. Also catalyzes the phosphorolysis of S-methyl-5'-thioadenosine into adenine and S-methyl-5-thio-alpha-D-ribose 1-phosphate. Also has adenosine deaminase activity. The protein is Purine nucleoside phosphorylase ORF3 of Streptomyces griseus.